The primary structure comprises 102 residues: Small ribosomal subunit protein uS10 (102 aa).

The protein belongs to the universal ribosomal protein uS10 family. As to quaternary structure, part of the 30S ribosomal subunit.

Its function is as follows. Involved in the binding of tRNA to the ribosomes. The polypeptide is Small ribosomal subunit protein uS10 (Clostridium botulinum (strain ATCC 19397 / Type A)).